The following is a 435-amino-acid chain: Uracil permease (435 aa).

12 helical membrane-spanning segments follow: residues 17-37 (FSWV…TILV), 42-62 (GMSP…YLLI), 67-87 (IPAY…VKAT), 91-111 (GAAM…ALLI), 122-142 (ILPP…LAST), 161-181 (LKHF…AIFL), 191-213 (LIGI…QPVL), 234-254 (VTLG…SEHI), 311-331 (VFSV…GFIG), 336-356 (LISS…FGII), 376-396 (NLII…IQVS), and 399-419 (GFQV…NLIL).

The protein belongs to the nucleobase:cation symporter-2 (NCS2) (TC 2.A.40) family.

It is found in the cell membrane. Transport of uracil in the cell. The protein is Uracil permease (pyrP) of Bacillus subtilis (strain 168).